The sequence spans 586 residues: uncharacterized protein (586 aa).

Positions 29–312 constitute an ABC transmembrane type-1 domain; it reads YGIAIGSMVV…LARMRISLES (284 aa). The next 4 membrane-spanning stretches (helical) occupy residues 30 to 50, 66 to 86, 162 to 184, and 256 to 276; these read GIAI…AWIM, VFGV…ATYV, MVIQ…ILGV, and IMET…GVLV. The ABC transporter domain occupies 346-580; it reads IRFKDVNFSY…DGVYRRLYEL (235 aa). 379 to 386 is an ATP binding site; sequence GPSGAGKS.

Belongs to the ABC transporter superfamily.

The protein resides in the cell membrane. This is an uncharacterized protein from Sinorhizobium fredii (strain NBRC 101917 / NGR234).